We begin with the raw amino-acid sequence, 274 residues long: Protein CURLY FLAG LEAF 1 (274 aa).

The segment at S17 to E44 is disordered. Positions T47–S52 match the EAR motif. The WW domain maps to V54–S88. Disordered regions lie at residues T83 to T133 and G175 to D216. Low complexity-rich tracts occupy residues R87–R106, A121–T133, and S184–S207.

Binds to HDG1.

Negatively regulates the cuticle development probably by interacting with the HD-ZIP IV transcription factor HDG1. The polypeptide is Protein CURLY FLAG LEAF 1 (Oryza sativa subsp. japonica (Rice)).